The sequence spans 144 residues: Large ribosomal subunit protein uL15 (144 aa).

Positions 1-48 (MIKLESLQDPSPRKRRTKLLGRGPSSGHGKTSCRGHKGDGSRSGYKRR) are disordered.

Belongs to the universal ribosomal protein uL15 family. In terms of assembly, part of the 50S ribosomal subunit.

Its function is as follows. Binds to the 23S rRNA. The sequence is that of Large ribosomal subunit protein uL15 from Chlamydia caviae (strain ATCC VR-813 / DSM 19441 / 03DC25 / GPIC) (Chlamydophila caviae).